A 293-amino-acid chain; its full sequence is 33 kDa chaperonin (293 aa).

2 disulfides stabilise this stretch: cysteine 238/cysteine 240 and cysteine 271/cysteine 274.

It belongs to the HSP33 family. Post-translationally, under oxidizing conditions two disulfide bonds are formed involving the reactive cysteines. Under reducing conditions zinc is bound to the reactive cysteines and the protein is inactive.

The protein localises to the cytoplasm. Its function is as follows. Redox regulated molecular chaperone. Protects both thermally unfolding and oxidatively damaged proteins from irreversible aggregation. Plays an important role in the bacterial defense system toward oxidative stress. The sequence is that of 33 kDa chaperonin from Staphylococcus aureus (strain Mu3 / ATCC 700698).